A 476-amino-acid chain; its full sequence is Bridging integrator 2 (476 aa).

The BAR domain occupies 26 to 242 (VLQKLGKTVE…MGKLDKQHSS (217 aa)). Disordered stretches follow at residues 269-369 (YPCP…TEGA) and 395-476 (GAAP…LTPL). Polar residues predominate over residues 279–292 (EPSSGAEQTPTSPR). Residues 310-324 (PAEPGAPMPGPPPAS) are compositionally biased toward pro residues. Residues 325–339 (PTSVRSASESESECS) are compositionally biased toward low complexity. Basic and acidic residues predominate over residues 340–353 (GESREIDLSPKEME). The span at 461–476 (VSCNPPQDPSESLTPL) shows a compositional bias: polar residues.

Its subcellular location is the cytoplasm. The chain is Bridging integrator 2 (BIN2) from Gallus gallus (Chicken).